The primary structure comprises 317 residues: Orange carotenoid-binding protein (317 aa).

Residues 18–169 (ADVVPATIAR…DMGFDTSKLG (152 aa)) enclose the OCP N-terminal domain. Residues leucine 37, tyrosine 203, and tryptophan 290 each coordinate 3'-hydroxyechinenone.

It belongs to the orange carotenoid-binding protein family. As to quaternary structure, homodimer. 3'-hydroxyechinenone is required as a cofactor. Proteolytically cleaved into a red 16.7 kDa form named red carotenoid-binding protein (RCP) which lacks 15 residues from the N-terminus and approximately 150 residues from the C-terminus.

The protein resides in the cellular thylakoid membrane. In terms of biological role, acts as a blue-light photoreceptor and photo-protectant. Essential for inhibiting damaged induced by excess blue-green light via a process known as non-photochemical quenching (NPQ). Binding carotenoids improves OCP's intrinsic photoprotectant activity by broadening its absorption spectrum and facilitating the dissipation of absorbed energy. In the dark or dim light the stable inactive form (OCP-O) is orange, upon illumination with blue-green light it converts to a metastable active red form (OCP-R), inducing energy dissipation, quenching cellular fluorescence via NPQ. The polypeptide is Orange carotenoid-binding protein (Limnospira maxima (Arthrospira maxima)).